A 369-amino-acid polypeptide reads, in one-letter code: Deoxyhypusine synthase (369 aa).

NAD(+)-binding positions include 105 to 109 (SNLIS), 131 to 133 (TAG), E137, and D238. Spermidine is bound at residue 136 to 137 (EE). Position 243 (D243) interacts with spermidine. G283 provides a ligand contact to NAD(+). H288 is a spermidine binding site. 308 to 309 (TA) serves as a coordination point for NAD(+). Spermidine contacts are provided by residues 314 to 316 (GSD) and 323 to 329 (EAVSWGK). Residue K329 is the Nucleophile of the active site. 342-343 (DA) contributes to the NAD(+) binding site.

This sequence belongs to the deoxyhypusine synthase family. NAD(+) serves as cofactor.

The enzyme catalyses [eIF5A protein]-L-lysine + spermidine = [eIF5A protein]-deoxyhypusine + propane-1,3-diamine. The protein operates within protein modification; eIF5A hypusination. Its function is as follows. Catalyzes the NAD-dependent oxidative cleavage of spermidine and the subsequent transfer of the butylamine moiety of spermidine to the epsilon-amino group of a critical lysine residue of the eIF-5A precursor protein to form the intermediate deoxyhypusine residue. This is the first step of the post-translational modification of that lysine into an unusual amino acid residue named hypusine. Hypusination is unique to mature eIF-5A factor and is essential for its function. This chain is Deoxyhypusine synthase (Dhps), found in Mus musculus (Mouse).